Consider the following 298-residue polypeptide: Quinolinate synthase (298 aa).

The iminosuccinate site is built by H19 and S36. C81 contributes to the [4Fe-4S] cluster binding site. Iminosuccinate contacts are provided by residues Y107 to N109 and S124. C168 contacts [4Fe-4S] cluster. Residues H193–E195 and T210 each bind iminosuccinate. Residue C254 participates in [4Fe-4S] cluster binding.

This sequence belongs to the quinolinate synthase family. Type 2 subfamily. Requires [4Fe-4S] cluster as cofactor.

The protein resides in the cytoplasm. It catalyses the reaction iminosuccinate + dihydroxyacetone phosphate = quinolinate + phosphate + 2 H2O + H(+). It participates in cofactor biosynthesis; NAD(+) biosynthesis; quinolinate from iminoaspartate: step 1/1. Inhibited by 4,5 dithiohydroxyphthalic acid (DTHPA) analogs, which bind to the catalytic iron site of the [4Fe-4S] cluster. In terms of biological role, catalyzes the condensation of iminoaspartate with dihydroxyacetone phosphate to form quinolinate. The chain is Quinolinate synthase from Thermotoga maritima (strain ATCC 43589 / DSM 3109 / JCM 10099 / NBRC 100826 / MSB8).